The following is a 597-amino-acid chain: Aspartate--tRNA(Asp/Asn) ligase (597 aa).

Residue Glu172 participates in L-aspartate binding. The aspartate stretch occupies residues 196-199 (QLFK). Arg218 provides a ligand contact to L-aspartate. ATP is bound by residues 218–220 (RDE) and Gln227. Residue His454 coordinates L-aspartate. Position 488 (Glu488) interacts with ATP. Arg495 contacts L-aspartate. 540-543 (GLDR) lines the ATP pocket.

This sequence belongs to the class-II aminoacyl-tRNA synthetase family. Type 1 subfamily. Homodimer.

The protein localises to the cytoplasm. It catalyses the reaction tRNA(Asx) + L-aspartate + ATP = L-aspartyl-tRNA(Asx) + AMP + diphosphate. Functionally, aspartyl-tRNA synthetase with relaxed tRNA specificity since it is able to aspartylate not only its cognate tRNA(Asp) but also tRNA(Asn). Reaction proceeds in two steps: L-aspartate is first activated by ATP to form Asp-AMP and then transferred to the acceptor end of tRNA(Asp/Asn). In Chromobacterium violaceum (strain ATCC 12472 / DSM 30191 / JCM 1249 / CCUG 213 / NBRC 12614 / NCIMB 9131 / NCTC 9757 / MK), this protein is Aspartate--tRNA(Asp/Asn) ligase.